A 962-amino-acid chain; its full sequence is AP2-associated protein kinase 1 (962 aa).

Met1 is subject to N-acetylmethionine. The segment covering 1–11 (MKKFFDSRREQ) has biased composition (basic and acidic residues). Residues 1–27 (MKKFFDSRREQGSSGLGSGSSGGGGSS) are disordered. Ser14 carries the phosphoserine modification. Over residues 14 to 27 (SGLGSGSSGGGGSS) the composition is skewed to gly residues. Residues 46–314 (VTVDEVLAEG…QVSYFSFKLL (269 aa)) form the Protein kinase domain. ATP contacts are provided by residues 52–60 (LAEGGFALV) and Lys74. The active-site Proton acceptor is Asp176. Tyr234 bears the Phosphotyrosine mark. At Ser235 the chain carries Phosphoserine. 2 disordered regions span residues 325 to 515 (NSPI…QFQA) and 576 to 633 (PQAQ…RAGH). 2 positions are modified to phosphothreonine: Thr353 and Thr388. Arg390 bears the Omega-N-methylarginine mark. Residues 397 to 418 (PLPQATGPSNQPSLLASVSQPK) are compositionally biased toward polar residues. Positions 419–434 (AQATPSQPLQSSQPKQ) are enriched in low complexity. Residues 435–444 (PQAPPTPQQT) are compositionally biased toward pro residues. Residue Thr440 is modified to Phosphothreonine. 3 stretches are compositionally biased toward low complexity: residues 445-485 (PAPQ…QPQQ), 498-514 (QQQQ…QQFQ), and 576-606 (PQAQ…KVQT). A Phosphothreonine modification is found at Thr607. Over residues 614 to 628 (GQKVGSLTPPSSPKT) the composition is skewed to polar residues. Ser619 carries the post-translational modification Phosphoserine. At Thr621 the chain carries Phosphothreonine. Ser624, Ser625, Ser638, and Ser651 each carry phosphoserine. Position 654 is a phosphothreonine (Thr654). Over residues 664–677 (ASLSKSKSATTTPS) the composition is skewed to low complexity. Residues 664–702 (ASLSKSKSATTTPSGSPRTSQQNVSNASEGSTWNPFDDD) form a disordered region. Residues 678 to 697 (GSPRTSQQNVSNASEGSTWN) are compositionally biased toward polar residues. A phosphoserine mark is found at Ser732, Ser847, Ser938, and Ser939. Residues 824–961 (EKADAAVESL…SLLLVDQLID (138 aa)) form a clathrin-binding domain (CBD) region. Disordered regions lie at residues 839–860 (PPVA…TDSL) and 925–946 (LITK…ESSL). Positions 846–860 (PSHTESVTSNRTDSL) are enriched in polar residues. The span at 932–945 (GGHSRNSSGSSESS) shows a compositional bias: low complexity.

Belongs to the protein kinase superfamily. Ser/Thr protein kinase family. Interacts (via CBD domain) with clathrin. Interacts with AP-2 complex. Interacts with NUMB. Interacts with alpha-adaptin. Interacts with EPS15. Interacts with membrane-bound activated NOTCH1 but not with the inactive full-length form of NOTCH1. Preferentially interacts with monoubiquitinated activated NOTCH1 compared to the non-ubiquitinated form. In terms of processing, autophosphorylated.

It localises to the cell membrane. Its subcellular location is the membrane. The protein localises to the clathrin-coated pit. The protein resides in the presynapse. It catalyses the reaction L-seryl-[protein] + ATP = O-phospho-L-seryl-[protein] + ADP + H(+). It carries out the reaction L-threonyl-[protein] + ATP = O-phospho-L-threonyl-[protein] + ADP + H(+). Its activity is regulated as follows. Stimulated by clathrin. Its function is as follows. Regulates clathrin-mediated endocytosis by phosphorylating the AP2M1/mu2 subunit of the adaptor protein complex 2 (AP-2) which ensures high affinity binding of AP-2 to cargo membrane proteins during the initial stages of endocytosis. Preferentially, may phosphorylate substrates on threonine residues. Regulates phosphorylation of other AP-2 subunits as well as AP-2 localization and AP-2-mediated internalization of ligand complexes. Phosphorylates NUMB and regulates its cellular localization, promoting NUMB localization to endosomes. Binds to and stabilizes the activated form of NOTCH1, increases its localization in endosomes and regulates its transcriptional activity. The protein is AP2-associated protein kinase 1 (Aak1) of Rattus norvegicus (Rat).